Consider the following 313-residue polypeptide: Intelectin-1 (313 aa).

An N-terminal signal peptide occupies residues 1–18 (MNQLSFLLFLIATTRGWS). One can recognise a Fibrinogen C-terminal domain in the interval 32-255 (SSSPSLPRSC…AANALCAGMR (224 aa)). Cysteine 41 and cysteine 70 are joined by a disulfide. Ca(2+) is bound by residues histidine 86, glutamate 87, aspartate 89, glycine 92, glycine 97, aspartate 98, and aspartate 133. 3 disulfides stabilise this stretch: cysteine 94-cysteine 280, cysteine 199-cysteine 259, and cysteine 251-cysteine 265. An N-linked (GlcNAc...) asparagine glycan is attached at asparagine 163. 4 residues coordinate Ca(2+): asparagine 260, glutamate 262, glutamate 274, and aspartate 282. Residues 262-263 (EH) and glutamate 274 each bind a carbohydrate. The GPI-anchor amidated serine moiety is linked to residue serine 298. Residues 299–313 (SSREITEAAVLLFYR) constitute a propeptide that is removed on maturation.

Homotrimer; disulfide-linked. May interact with LTF. In terms of processing, N-glycosylated. In terms of tissue distribution, highly expressed in omental adipose tissue where it is found in stromal vascular cells but not in fat cells but is barely detectable in subcutaneous adipose tissue (at protein level). Highly expressed in the small intestine. Also found in the heart, testis, colon, salivary gland, skeletal muscle, pancreas and thyroid and, to a lesser degree, in the uterus, spleen, prostate, lymph node and thymus.

It localises to the cell membrane. Its subcellular location is the secreted. Functionally, lectin that specifically recognizes microbial carbohydrate chains in a calcium-dependent manner. Binds to microbial glycans that contain a terminal acyclic 1,2-diol moiety, including beta-linked D-galactofuranose (beta-Galf), D-phosphoglycerol-modified glycans, D-glycero-D-talo-oct-2-ulosonic acid (KO) and 3-deoxy-D-manno-oct-2-ulosonic acid (KDO). Binds to glycans from Gram-positive and Gram-negative bacteria, including K.pneumoniae, S.pneumoniae, Y.pestis, P.mirabilis and P.vulgaris. Does not bind human glycans. Probably plays a role in the defense system against microorganisms. May function as adipokine that has no effect on basal glucose uptake but enhances insulin-stimulated glucose uptake in adipocytes. Increases AKT phosphorylation in the absence and presence of insulin. May interact with lactoferrin/LTF and increase its uptake, and may thereby play a role in iron absorption. This is Intelectin-1 (ITLN1) from Homo sapiens (Human).